The sequence spans 578 residues: Matrix metalloproteinase-17 (578 aa).

2 disordered regions span residues M1–G22 and P107–S133. The N-terminal stretch at M1–A39 is a signal peptide. The span at P11–G22 shows a compositional bias: pro residues. Positions A40–R124 are excised as a propeptide. The Cysteine switch motif lies at P107–L114. C109 is a Zn(2+) binding site. The N-linked (GlcNAc...) asparagine glycan is linked to N136. A Zn(2+)-binding site is contributed by H247. E248 is a catalytic residue. Residues H251 and H257 each contribute to the Zn(2+) site. The interval P301–H334 is disordered. Residue N322 is glycosylated (N-linked (GlcNAc...) asparagine). 4 Hemopexin repeats span residues P333 to L382, L386 to P432, D436 to V479, and P480 to C527. C336 and C527 are joined by a disulfide. Residue S558 is the site of GPI-anchor amidated serine attachment. A propeptide spans D559 to L578 (removed in mature form).

This sequence belongs to the peptidase M10A family. Requires Zn(2+) as cofactor. It depends on Ca(2+) as a cofactor. In terms of processing, the precursor is cleaved by a furin endopeptidase. In terms of tissue distribution, expressed by monocytes and macrophages.

The protein localises to the cell membrane. Its subcellular location is the secreted. It is found in the extracellular space. The protein resides in the extracellular matrix. Functionally, endopeptidase that degrades various components of the extracellular matrix, such as fibrin. May be involved in the activation of membrane-bound precursors of growth factors or inflammatory mediators, such as tumor necrosis factor-alpha. May also be involved in tumoral process. Not obvious if able to proteolytically activate progelatinase A. Does not hydrolyze collagen types I, II, III, IV and V, gelatin, fibronectin, laminin, decorin nor alpha1-antitrypsin. The protein is Matrix metalloproteinase-17 (Mmp17) of Mus musculus (Mouse).